Consider the following 134-residue polypeptide: D-ribose pyranase (134 aa).

His-20 acts as the Proton donor in catalysis. Substrate is bound by residues Asp-28, His-99, and 123-125 (FSN).

It belongs to the RbsD / FucU family. RbsD subfamily. Homodecamer.

The protein localises to the cytoplasm. It carries out the reaction beta-D-ribopyranose = beta-D-ribofuranose. Its pathway is carbohydrate metabolism; D-ribose degradation; D-ribose 5-phosphate from beta-D-ribopyranose: step 1/2. Its function is as follows. Catalyzes the interconversion of beta-pyran and beta-furan forms of D-ribose. This is D-ribose pyranase from Staphylococcus epidermidis (strain ATCC 12228 / FDA PCI 1200).